We begin with the raw amino-acid sequence, 367 residues long: Testis-specific serine/threonine-protein kinase 1 (367 aa).

The Protein kinase domain maps to 12–272 (YLLGINLGEG…IDEILSHCWM (261 aa)). ATP is bound by residues 18–26 (LGEGSYAKV) and Lys41. Asp136 (proton acceptor) is an active-site residue. Phosphothreonine is present on Thr174. The interval 276 to 367 (ARGSPSVAIN…PQQPPETRAQ (92 aa)) is disordered. Over residues 303–314 (GSDKKSATKLEP) the composition is skewed to basic and acidic residues.

It belongs to the protein kinase superfamily. CAMK Ser/Thr protein kinase family. Interacts with TSSK2. Interacts with HSP90; this interaction stabilizes TSSK1. It depends on Mg(2+) as a cofactor. Autophosphorylated. Post-translationally, ubiquitinated; HSP90 activity negatively regulates ubiquitination and degradation. Testis-specific. Present in sperm (at protein level).

It is found in the cytoplasm. Its subcellular location is the cytoplasmic vesicle. It localises to the secretory vesicle. The protein resides in the acrosome. The protein localises to the cell projection. It is found in the cilium. Its subcellular location is the flagellum. The catalysed reaction is L-seryl-[protein] + ATP = O-phospho-L-seryl-[protein] + ADP + H(+). The enzyme catalyses L-threonyl-[protein] + ATP = O-phospho-L-threonyl-[protein] + ADP + H(+). With respect to regulation, kinase activity is specifically inhibited by 2 classes of compounds: biphenyl compounds (1,1'-(biphenyl-4,4'-diyl)bis(2,2-dihydroxyethanone)) and 1,2,7-trialky-1H-imidazo[4,5-g]quinoxalin-6-one. Activated by phosphorylation on Thr-174 and potentially by autophosphorylation. Testis-specific serine/threonine-protein kinase required during spermatid development. Phosphorylates 'Ser-288' of TSKS. Involved in the late stages of spermatogenesis, during the reconstruction of the cytoplasm. During spermatogenesis, required for the transformation of a ring-shaped structure around the base of the flagellum originating from the chromatoid body. The chain is Testis-specific serine/threonine-protein kinase 1 (TSSK1B) from Homo sapiens (Human).